The chain runs to 206 residues: ATP phosphoribosyltransferase (206 aa).

It belongs to the ATP phosphoribosyltransferase family. Short subfamily. As to quaternary structure, heteromultimer composed of HisG and HisZ subunits.

It localises to the cytoplasm. It carries out the reaction 1-(5-phospho-beta-D-ribosyl)-ATP + diphosphate = 5-phospho-alpha-D-ribose 1-diphosphate + ATP. Its pathway is amino-acid biosynthesis; L-histidine biosynthesis; L-histidine from 5-phospho-alpha-D-ribose 1-diphosphate: step 1/9. Functionally, catalyzes the condensation of ATP and 5-phosphoribose 1-diphosphate to form N'-(5'-phosphoribosyl)-ATP (PR-ATP). Has a crucial role in the pathway because the rate of histidine biosynthesis seems to be controlled primarily by regulation of HisG enzymatic activity. This chain is ATP phosphoribosyltransferase, found in Campylobacter curvus (strain 525.92).